A 108-amino-acid polypeptide reads, in one-letter code: Replication initiation control protein YabA (108 aa).

4 residues coordinate Zn(2+): His-83, Cys-85, Cys-99, and Cys-102.

It belongs to the YabA family. Homotetramer. Interacts with both DnaA and DnaN, acting as a bridge between these two proteins. The cofactor is Zn(2+).

The protein localises to the cytoplasm. The protein resides in the nucleoid. Its function is as follows. Involved in control of chromosome replication initiation. Inhibits the cooperative binding of DnaA to the oriC region, thus negatively regulating initiation of chromosome replication. Inhibits the ability of DnaA-ATP to form a helix on DNA; does not disassemble preformed DnaA-DNA helices. Decreases the residence time of DnaA on the chromosome at its binding sites (oriC, replication forks and promoter-binding sites). Tethers DnaA to the replication machinery via the DNA polymerase beta sliding clamp subunit (dnaN). Associates with oriC and other DnaA targets on the chromosome in a DnaA-dependent manner. This Lactococcus lactis subsp. cremoris (strain SK11) protein is Replication initiation control protein YabA.